A 223-amino-acid chain; its full sequence is Deoxyribose-phosphate aldolase (223 aa).

Asp-89 (proton donor/acceptor) is an active-site residue. Catalysis depends on Lys-152, which acts as the Schiff-base intermediate with acetaldehyde. The Proton donor/acceptor role is filled by Lys-181.

Belongs to the DeoC/FbaB aldolase family. DeoC type 1 subfamily.

The protein resides in the cytoplasm. The enzyme catalyses 2-deoxy-D-ribose 5-phosphate = D-glyceraldehyde 3-phosphate + acetaldehyde. Its pathway is carbohydrate degradation; 2-deoxy-D-ribose 1-phosphate degradation; D-glyceraldehyde 3-phosphate and acetaldehyde from 2-deoxy-alpha-D-ribose 1-phosphate: step 2/2. Functionally, catalyzes a reversible aldol reaction between acetaldehyde and D-glyceraldehyde 3-phosphate to generate 2-deoxy-D-ribose 5-phosphate. This Listeria monocytogenes serotype 4a (strain HCC23) protein is Deoxyribose-phosphate aldolase.